A 240-amino-acid chain; its full sequence is Ribonuclease P protein component (240 aa).

Residues 1 to 140 are disordered; it reads MDEKDLATQQ…KKAGGKGLVS (140 aa). Positions 40–51 are enriched in pro residues; that stretch reads APPPHRVIPPHP. Residues 47 to 123 form an insert region; sequence IPPHPGLRQD…PGPDRDGGSK (77 aa). Low complexity predominate over residues 122–132; sequence SKASRASSPKK.

It belongs to the RnpA family. As to quaternary structure, consists of a catalytic RNA component (M1 or rnpB) and a protein subunit.

The enzyme catalyses Endonucleolytic cleavage of RNA, removing 5'-extranucleotides from tRNA precursor.. Functionally, RNaseP catalyzes the removal of the 5'-leader sequence from pre-tRNA to produce the mature 5'-terminus. It can also cleave other RNA substrates such as 4.5S RNA. The protein component plays an auxiliary but essential role in vivo by binding to the 5'-leader sequence and broadening the substrate specificity of the ribozyme. The sequence is that of Ribonuclease P protein component from Thermus filiformis.